The following is an 822-amino-acid chain: Serine/threonine-protein kinase kin-29 (822 aa).

In terms of domain architecture, Protein kinase spans 16–267 (YDVGRAIGKG…IQNVLQHRWM (252 aa)). ATP-binding positions include 22–30 (IGKGNFATV) and Lys-45. The active-site Proton acceptor is the Asp-138. Disordered stretches follow at residues 348-367 (EGTG…LSGK), 389-423 (LSSP…RQFG), and 577-602 (NPIP…WASP). Residues 394–406 (CDSDDSSNSDLCD) are compositionally biased toward acidic residues.

This sequence belongs to the protein kinase superfamily. CAMK Ser/Thr protein kinase family. SNF1 subfamily. Interacts with tax-6. The cofactor is Mg(2+). In terms of processing, autophosphorylated. Elevated cAMP levels appears to act via PKA to directly or indirectly phosphorylate multiple sites on kin-29 and inhibit function. Primarily neuronal, with additional expression in body wall muscle and hypodermal cells. Among neuronal cells, expressed in multiple sensory neurons and interneurons in the lateral, anterior, and lumbar ganglia, as well as in motor neurons in the ventral motor cord. Present in the AWB and AWC olfactory neurons.

The protein localises to the cytoplasm. Its subcellular location is the nucleus. The enzyme catalyses L-seryl-[protein] + ATP = O-phospho-L-seryl-[protein] + ADP + H(+). It catalyses the reaction L-threonyl-[protein] + ATP = O-phospho-L-threonyl-[protein] + ADP + H(+). Its function is as follows. Regulates chemoreceptor expression by phosphorylating the hda-4 class II histone deacetylase (HDAC) and inhibiting the gene repression functions of hda-4 and the mef-2 transcription factor, enabling the correct sensing and transduction of food signals. Role in determining body size, the dauer decision and serotonin-mediated egg laying. May modulate the Sma/Mab pathway and regulates development in the later larval stages. This chain is Serine/threonine-protein kinase kin-29, found in Caenorhabditis elegans.